The chain runs to 366 residues: Peptide chain release factor 1 (366 aa).

Q239 bears the N5-methylglutamine mark.

The protein belongs to the prokaryotic/mitochondrial release factor family. In terms of processing, methylated by PrmC. Methylation increases the termination efficiency of RF1.

Its subcellular location is the cytoplasm. In terms of biological role, peptide chain release factor 1 directs the termination of translation in response to the peptide chain termination codons UAG and UAA. In Baumannia cicadellinicola subsp. Homalodisca coagulata, this protein is Peptide chain release factor 1.